Consider the following 852-residue polypeptide: Exported protein YdbA (852 aa).

A signal peptide spans 1–21; it reads MQRKTLLSACIALALSGQGWA. 5 disordered regions span residues 30 to 50, 91 to 145, 307 to 354, 407 to 449, and 506 to 531; these read TTGEKKNTNVTCPADPGKLSP, DDDH…FNND, TITN…QDGD, TNGG…KVIQ, and NGGTGTQINGNDATANNSGKTTVDGK. Residues 307 to 319 show a composition bias toward low complexity; that stretch reads TITNGGTGTQING. Polar residues predominate over residues 339 to 348; sequence GTEINGNNGK. A compositionally biased stretch (low complexity) spans 506–516; sequence NGGTGTQINGN. The segment covering 517–526 has biased composition (polar residues); sequence DATANNSGKT.

The protein resides in the secreted. Its function is as follows. The full-length protein (which is about 2000 amino acids long) is part of the autotransporter family. This chain is Exported protein YdbA (ydbA), found in Escherichia coli (strain K12).